Reading from the N-terminus, the 485-residue chain is Adenosylhomocysteinase (485 aa).

Residues threonine 64, aspartate 139, and glutamate 205 each coordinate substrate. 206-208 (TTT) serves as a coordination point for NAD(+). Residues lysine 235 and aspartate 239 each coordinate substrate. Residues asparagine 240, 269 to 274 (GYGDVG), glutamate 292, asparagine 327, 348 to 350 (IGH), and asparagine 397 contribute to the NAD(+) site.

This sequence belongs to the adenosylhomocysteinase family. Homotetramer. NAD(+) is required as a cofactor.

It carries out the reaction S-adenosyl-L-homocysteine + H2O = L-homocysteine + adenosine. The protein operates within amino-acid biosynthesis; L-homocysteine biosynthesis; L-homocysteine from S-adenosyl-L-homocysteine: step 1/1. Functionally, adenosylhomocysteine is a competitive inhibitor of S-adenosyl-L-methionine-dependent methyl transferase reactions; therefore adenosylhomocysteinase may play a key role in the control of methylations via regulation of the intracellular concentration of adenosylhomocysteine. In Triticum aestivum (Wheat), this protein is Adenosylhomocysteinase (SAHH).